The sequence spans 423 residues: Putative competence-damage inducible protein (423 aa).

It belongs to the CinA family.

This is Putative competence-damage inducible protein from Streptococcus equi subsp. zooepidemicus (strain MGCS10565).